Here is a 486-residue protein sequence, read N- to C-terminus: Vanillin dehydrogenase (486 aa).

Residues 210–211, 230–231, and 252–254 contribute to the NAD(+) site; these read GP, GS, and ELG. Glu252 acts as the Proton acceptor in catalysis. Cys286 functions as the Nucleophile in the catalytic mechanism. 380–382 lines the NAD(+) pocket; that stretch reads EVF.

It belongs to the aldehyde dehydrogenase family.

The catalysed reaction is vanillin + NAD(+) + H2O = vanillate + NADH + 2 H(+). Catalyzes NAD(+)-dependent oxidation of vanillin to vanillate. Also oxidizes other aromatic aldehydes including benzaldehyde, coniferyl aldehyde and cinnamaldehyde, but has a preference for vanillin. Not active with NADP(+). Involved in the degradation pathway of lignin-derived aromatic compounds of plant cell walls. Catalyzes the conversion of vanillin to vanillate due to toxicity of vanillin to the cells. The sequence is that of Vanillin dehydrogenase from Amycolatopsis sp. (strain ATCC 39116 / 75iv2).